Here is a 347-residue protein sequence, read N- to C-terminus: RNA 3'-terminal phosphate cyclase (347 aa).

ATP-binding positions include glutamine 109 and 290-294 (YLADQ). The Tele-AMP-histidine intermediate role is filled by histidine 315.

Belongs to the RNA 3'-terminal cyclase family. Type 1 subfamily.

It localises to the cytoplasm. The enzyme catalyses a 3'-end 3'-phospho-ribonucleotide-RNA + ATP = a 3'-end 2',3'-cyclophospho-ribonucleotide-RNA + AMP + diphosphate. In terms of biological role, catalyzes the conversion of 3'-phosphate to a 2',3'-cyclic phosphodiester at the end of RNA. The mechanism of action of the enzyme occurs in 3 steps: (A) adenylation of the enzyme by ATP; (B) transfer of adenylate to an RNA-N3'P to produce RNA-N3'PP5'A; (C) and attack of the adjacent 2'-hydroxyl on the 3'-phosphorus in the diester linkage to produce the cyclic end product. The biological role of this enzyme is unknown but it is likely to function in some aspects of cellular RNA processing. This is RNA 3'-terminal phosphate cyclase from Ralstonia nicotianae (strain ATCC BAA-1114 / GMI1000) (Ralstonia solanacearum).